The chain runs to 72 residues: Conotoxin VnMKLT2-021 (72 aa).

A signal peptide spans 1–22; the sequence is MKLTCVLIVAVLFLTACQLTTA. A propeptide spanning residues 23-45 is cleaved from the precursor; it reads ASYARSERQHPDLGSSDQNSKLT. Cystine bridges form between Cys48-Cys62, Cys55-Cys66, and Cys61-Cys71.

It belongs to the conotoxin O1 superfamily. In terms of tissue distribution, expressed by the venom duct.

The protein localises to the secreted. The chain is Conotoxin VnMKLT2-021 from Conus ventricosus (Mediterranean cone).